The following is a 381-amino-acid chain: Probable serine/threonine-protein kinase PBL22 (381 aa).

The S-palmitoyl cysteine moiety is linked to residue C3. The residue at position 64 (T64) is a Phosphothreonine. The Protein kinase domain maps to 75–351 (FREGNIIGKG…GDVVVAFEYI (277 aa)). ATP is bound by residues 81 to 89 (IGKGGFGSV) and K103. Y148 carries the phosphotyrosine modification. Residue D201 is the Proton acceptor of the active site. Phosphoserine is present on S235. Phosphothreonine occurs at positions 236 and 241. A Phosphotyrosine modification is found at Y249. The interval 361–381 (RRTARKSTDSNRLRRETKQSY) is disordered.

The protein belongs to the protein kinase superfamily. Ser/Thr protein kinase family. In terms of processing, palmitoylation at Cys-3 and Cys-6 are required for plasma membrane location.

Its subcellular location is the cell membrane. It carries out the reaction L-seryl-[protein] + ATP = O-phospho-L-seryl-[protein] + ADP + H(+). The catalysed reaction is L-threonyl-[protein] + ATP = O-phospho-L-threonyl-[protein] + ADP + H(+). Functionally, may be involved in plant defense signaling. This Arabidopsis thaliana (Mouse-ear cress) protein is Probable serine/threonine-protein kinase PBL22.